We begin with the raw amino-acid sequence, 291 residues long: Pyridoxal 5'-phosphate synthase subunit PdxS (291 aa).

Asp-23 contributes to the D-ribose 5-phosphate binding site. Lys-80 serves as the catalytic Schiff-base intermediate with D-ribose 5-phosphate. Gly-152 lines the D-ribose 5-phosphate pocket. D-glyceraldehyde 3-phosphate is bound at residue Arg-164. D-ribose 5-phosphate is bound by residues Gly-213 and 234–235 (GS).

Belongs to the PdxS/SNZ family. In terms of assembly, in the presence of PdxT, forms a dodecamer of heterodimers.

The catalysed reaction is aldehydo-D-ribose 5-phosphate + D-glyceraldehyde 3-phosphate + L-glutamine = pyridoxal 5'-phosphate + L-glutamate + phosphate + 3 H2O + H(+). It participates in cofactor biosynthesis; pyridoxal 5'-phosphate biosynthesis. Functionally, catalyzes the formation of pyridoxal 5'-phosphate from ribose 5-phosphate (RBP), glyceraldehyde 3-phosphate (G3P) and ammonia. The ammonia is provided by the PdxT subunit. Can also use ribulose 5-phosphate and dihydroxyacetone phosphate as substrates, resulting from enzyme-catalyzed isomerization of RBP and G3P, respectively. The chain is Pyridoxal 5'-phosphate synthase subunit PdxS from Haemophilus influenzae (strain PittGG).